A 493-amino-acid polypeptide reads, in one-letter code: Glutamyl-tRNA(Gln) amidotransferase subunit A (493 aa).

Catalysis depends on charge relay system residues K78 and S158. The active-site Acyl-ester intermediate is the S182.

The protein belongs to the amidase family. GatA subfamily. As to quaternary structure, heterotrimer of A, B and C subunits.

It catalyses the reaction L-glutamyl-tRNA(Gln) + L-glutamine + ATP + H2O = L-glutaminyl-tRNA(Gln) + L-glutamate + ADP + phosphate + H(+). Functionally, allows the formation of correctly charged Gln-tRNA(Gln) through the transamidation of misacylated Glu-tRNA(Gln) in organisms which lack glutaminyl-tRNA synthetase. The reaction takes place in the presence of glutamine and ATP through an activated gamma-phospho-Glu-tRNA(Gln). This chain is Glutamyl-tRNA(Gln) amidotransferase subunit A, found in Rickettsia conorii (strain ATCC VR-613 / Malish 7).